We begin with the raw amino-acid sequence, 505 residues long: Folate transporter 1 (505 aa).

The next 4 helical transmembrane spans lie at 58 to 78, 89 to 109, 122 to 142, and 146 to 166; these read SLIAMLQGVEVLCNLSIIYLL, LSIVMCFIKIPWSIKLVWAVI, YYLLLGSFLCILSLICLGLIT, and LFITILLLFIYFFGSSLCNVI. Asparagine 177, asparagine 181, and asparagine 186 each carry an N-linked (GlcNAc...) asparagine glycan. 2 consecutive transmembrane segments (helical) span residues 192–212 and 216–236; these read AFRKLSFAIMSYLSGYLLLLI and HIFLIGSFLPICVFTSGFFII. A glycan (N-linked (GlcNAc...) asparagine) is linked at asparagine 240. The next 5 helical transmembrane spans lie at 266-286, 300-320, 326-346, 352-372, and 405-425; these read IIFIFIMMSTPSCGNTLFFYI, MAMFQSLASFISIISYMLFFT, KLLLYSTIIITPFCLLPLVVI, FLFIPNTLFFITDTVLIEFIA, and FASIISSFLSSLLTYSLNITS. Asparagine 427 is a glycosylation site (N-linked (GlcNAc...) asparagine). Residues 431–451 traverse the membrane as a helical segment; it reads LPYMIIICCLTNIIPIFFLYI. Asparagine 454 carries N-linked (GlcNAc...) asparagine glycosylation.

The protein belongs to the major facilitator superfamily. Folate-biopterin transporter (TC 2.A.71) family.

The protein resides in the cell membrane. The enzyme catalyses folate(in) + H(+)(in) = folate(out) + H(+)(out). Transport of folates is inhibited by probenecid and methotrexate. Its function is as follows. Folate transporter with broad substrate specificity. Transports folic acid, folinic acid, pteroic acid, dihydropteroic acid, the folate precursor p-amino benzoic acid (pABA) and the human folate catabolite pABA monoglutamate. In Plasmodium falciparum (isolate 3D7), this protein is Folate transporter 1.